The following is a 639-amino-acid chain: UvrABC system protein C (639 aa).

The region spanning 31-109 is the GIY-YIG domain; it reads EQAGVYRMYD…IKKYQPKYNI (79 aa). The region spanning 218–253 is the UVR domain; it reads SAVIEQLVARMELASNELHFELAAKYRDQIVTLRKV.

The protein belongs to the UvrC family. As to quaternary structure, interacts with UvrB in an incision complex.

It localises to the cytoplasm. In terms of biological role, the UvrABC repair system catalyzes the recognition and processing of DNA lesions. UvrC both incises the 5' and 3' sides of the lesion. The N-terminal half is responsible for the 3' incision and the C-terminal half is responsible for the 5' incision. The chain is UvrABC system protein C from Colwellia psychrerythraea (strain 34H / ATCC BAA-681) (Vibrio psychroerythus).